Here is a 137-residue protein sequence, read N- to C-terminus: uncharacterized protein (137 aa).

A Ubiquitin-like domain is found at 58 to 135; it reads VHVVAKTVRP…EVNLQMFLMN (78 aa).

The protein localises to the cytoplasm. Its subcellular location is the nucleus. This is an uncharacterized protein from Schizosaccharomyces pombe (strain 972 / ATCC 24843) (Fission yeast).